Reading from the N-terminus, the 464-residue chain is A-type ATP synthase subunit B (464 aa).

This sequence belongs to the ATPase alpha/beta chains family. In terms of assembly, has multiple subunits with at least A(3), B(3), C, D, E, F, H, I and proteolipid K(x).

The protein localises to the cell membrane. Component of the A-type ATP synthase that produces ATP from ADP in the presence of a proton gradient across the membrane. The B chain is a regulatory subunit. The sequence is that of A-type ATP synthase subunit B from Methanococcus aeolicus (strain ATCC BAA-1280 / DSM 17508 / OCM 812 / Nankai-3).